The following is a 600-amino-acid chain: Arginine--tRNA ligase (600 aa).

Residues 132-142 carry the 'HIGH' region motif; it reads ANPTGPLHVGH.

It belongs to the class-I aminoacyl-tRNA synthetase family. Monomer.

It localises to the cytoplasm. The catalysed reaction is tRNA(Arg) + L-arginine + ATP = L-arginyl-tRNA(Arg) + AMP + diphosphate. This is Arginine--tRNA ligase from Ralstonia nicotianae (strain ATCC BAA-1114 / GMI1000) (Ralstonia solanacearum).